Here is a 413-residue protein sequence, read N- to C-terminus: Multifunctional CCA protein (413 aa).

G8 and R11 together coordinate ATP. Residues G8 and R11 each coordinate CTP. Positions 21 and 23 each coordinate Mg(2+). Residues R91, R143, and R146 each coordinate ATP. Residues R91, R143, and R146 each coordinate CTP. In terms of domain architecture, HD spans 232–333 (TGVHVMMVVD…VRFFERSDAL (102 aa)).

This sequence belongs to the tRNA nucleotidyltransferase/poly(A) polymerase family. Bacterial CCA-adding enzyme type 1 subfamily. Monomer. Can also form homodimers and oligomers. Mg(2+) serves as cofactor. Requires Ni(2+) as cofactor.

It catalyses the reaction a tRNA precursor + 2 CTP + ATP = a tRNA with a 3' CCA end + 3 diphosphate. The enzyme catalyses a tRNA with a 3' CCA end + 2 CTP + ATP = a tRNA with a 3' CCACCA end + 3 diphosphate. Functionally, catalyzes the addition and repair of the essential 3'-terminal CCA sequence in tRNAs without using a nucleic acid template. Adds these three nucleotides in the order of C, C, and A to the tRNA nucleotide-73, using CTP and ATP as substrates and producing inorganic pyrophosphate. tRNA 3'-terminal CCA addition is required both for tRNA processing and repair. Also involved in tRNA surveillance by mediating tandem CCA addition to generate a CCACCA at the 3' terminus of unstable tRNAs. While stable tRNAs receive only 3'-terminal CCA, unstable tRNAs are marked with CCACCA and rapidly degraded. The protein is Multifunctional CCA protein of Burkholderia ambifaria (strain MC40-6).